A 355-amino-acid polypeptide reads, in one-letter code: MFTLSDFDFNLPPELIAQTALPERTASRLLEVDHTVEPARLVDRNFVELPSCIAPGDLLVFNDTRVLKARFFGQKASGGKIEVLIERVTGTHTALAQIRASKSPGAGTTLRLADAFDVTVGERVEPFFTLHFPQPCLTLIEQHGRLPLPPYIEHDADASDETRYQTVYASNPGAVAAPTAGLHFDLPLLERLDAMGVERATLTLHVGAGTFQPVRVENIAEHRMHSEWYDLPQSLVDKIAATRARGGNVIAVGTTSMRALEAAARSADEAGRPLAATQAETDIFITPGYRFRVVDRLVTNFHLPKSTLLMLVSAFAGVETIRAAYRHAIDQRYRFFSYGDAMLLTRRDTPEAPRA.

This sequence belongs to the QueA family. As to quaternary structure, monomer.

It is found in the cytoplasm. The enzyme catalyses 7-aminomethyl-7-carbaguanosine(34) in tRNA + S-adenosyl-L-methionine = epoxyqueuosine(34) in tRNA + adenine + L-methionine + 2 H(+). It functions in the pathway tRNA modification; tRNA-queuosine biosynthesis. Its function is as follows. Transfers and isomerizes the ribose moiety from AdoMet to the 7-aminomethyl group of 7-deazaguanine (preQ1-tRNA) to give epoxyqueuosine (oQ-tRNA). This is S-adenosylmethionine:tRNA ribosyltransferase-isomerase from Burkholderia ambifaria (strain MC40-6).